We begin with the raw amino-acid sequence, 395 residues long: XK-related protein 8 (395 aa).

Over 1–12 (MPWSSRGALLRD) the chain is Cytoplasmic. Residues 13–33 (LVLGVLGTAAFLLDLGTDLWA) traverse the membrane as a helical segment. Residues 34-47 (AVQYALGGRYLWAA) are Extracellular-facing. Residues 48–68 (LVLALLGLASVALQLFSWLWL) traverse the membrane as a helical segment. Residues 69–158 (RADPAGLHGS…VLAIMLQSGR (90 aa)) are Cytoplasmic-facing. A helical membrane pass occupies residues 159 to 179 (AEYYQWVGICTSFLGISWALL). Residues 180–200 (DYHRALRTCLPSRPLLGLGSS) lie on the Extracellular side of the membrane. A helical transmembrane segment spans residues 201 to 221 (VIYFLWNLLLLWPRVLAVALF). Over 222–223 (SA) the chain is Cytoplasmic. The chain crosses the membrane as a helical span at residues 224-244 (LFPSYVALHFLGLWLVLLLWV). Residues 245 to 258 (WLQGTDFMPDPSSE) lie on the Extracellular side of the membrane. A helical membrane pass occupies residues 259–279 (WLYQVTVATILYFSWFNVAEG). Residues 280–284 (RTRGR) lie on the Cytoplasmic side of the membrane. Residues 285-305 (AIIHFAFLLSDSILLVATWVT) form a helical membrane-spanning segment. The Extracellular segment spans residues 306-312 (HSSWLPS). A helical transmembrane segment spans residues 313–333 (GIPLQLWLPVGCGCFFLGLAL). The Cytoplasmic portion of the chain corresponds to 334–395 (RLVYYHWLHP…KDEAALPVKG (62 aa)). A Phosphoserine modification is found at S362. T375 is modified (phosphothreonine).

This sequence belongs to the XK family. In terms of assembly, interacts with BSG and NPTN; which act as chaperones to localize XKR8 at the cell membrane. Homodimer. In terms of processing, undergoes proteolytic processing by caspase-3 (CASP3), leading to its activation. Phosphorylation at Thr-375 activates the phospholipid scramblase activity.

It localises to the cell membrane. The protein resides in the cytoplasm. Its subcellular location is the perinuclear region. The enzyme catalyses a 1,2-diacyl-sn-glycero-3-phospho-L-serine(in) = a 1,2-diacyl-sn-glycero-3-phospho-L-serine(out). Its activity is regulated as follows. Activated upon caspase cleavage to generate the XK-related protein 8, processed form. Does not act prior the onset of apoptosis. Functionally, phospholipid scramblase that promotes phosphatidylserine exposure on apoptotic cell surface. Phosphatidylserine is a specific marker only present at the surface of apoptotic cells and acts as a specific signal for engulfment. Required for the clearance of apoptotic cells, such as engulfment of apoptotic germ cells by Sertoli cells, clearance of senescent neutrophils or regulation of bipolar cell numbers in the retina. Has no effect on calcium-induced exposure of phosphatidylserine. Promotes myoblast differentiation and survival. The polypeptide is XK-related protein 8 (Pan troglodytes (Chimpanzee)).